The following is a 122-amino-acid chain: Cytochrome c-556 (122 aa).

Residues M11, C111, C114, and H115 each coordinate heme. 4 residues coordinate heme c: M11, C111, C114, and H115.

In terms of assembly, monomer. In terms of processing, binds 1 heme c group covalently per subunit.

Functionally, low-spin monoheme cytochrome c. The sequence is that of Cytochrome c-556 from Agrobacterium tumefaciens (strain B2A).